The sequence spans 659 residues: MTKTRIRIVVCGDSGVGKTSLIACLVKDQFISWLQDVLPPITIPKDFSSSRYSPENTVVVDTGNSDLATLHKELKNADVIWLVYSDHDSYERIALYWMMMFRSLGVNLPVVLCRNKCDDEVEFLSSANIMDSDDDQLDNKIEDEEFIPILREFKEVETCIKASAKFKFNVNQAFYLCQRTITNPVAPLFDARIGELKPLGVLALKRVFVLSDMDQDGFLNDDEITKLQKKCFSKAVDVNELQFLKDTLTSISSPNQEYEDYILNVPGKGITKDGFLVLNKIYAEKGRHETTWGILRAFHYTDTLTINEKILRPKIDIPQSSSVELSPLGYRFFVDTFLKYDKDNDGGLNNDELHLLFKTTPGLPHLWIETNFPFLTVVNNSACITLQGWLALWSMTTFIDYSVTTEYLIYLGFDKDAKNALQITKPRRKRRRNGVYYRAPVFDRKVLNCYMLGKGNSGKSSLLESFLGRSFSEAYSPTIRPKISVNSLELKGGKQYYLILQELGEQETPILENKGKLDECDVLCLCYDSSDPESFSYIVSLIDKFDYLKELPIVFVALKADLDKQQQRCHIQPDDFADQLFIDHPLHISSTWPSSLNELFIKLTEVALEPITSTAGLGPAVLTNDIDYRQTIVAISSVVGFASLFTFTALKIYSSFKNT.

The Cytoplasmic portion of the chain corresponds to 1–631 (MTKTRIRIVV…LTNDIDYRQT (631 aa)). The Miro 1 domain occupies 3-183 (KTRIRIVVCG…FYLCQRTITN (181 aa)). Residues 12-19 (GDSGVGKT), 61-63 (DTG), and 115-118 (NKCD) each bind GTP. 2 consecutive EF-hand domains span residues 199 to 234 (LGVLALKRVFVLSDMDQDGFLNDDEITKLQKKCFSK) and 328 to 363 (LGYRFFVDTFLKYDKDNDGGLNNDELHLLFKTTPGL). The Ca(2+) site is built by aspartate 212, aspartate 214, aspartate 216, glutamate 223, aspartate 341, aspartate 343, aspartate 345, and glutamate 352. The region spanning 444–609 (RKVLNCYMLG…FIKLTEVALE (166 aa)) is the Miro 2 domain. Residues 453 to 460 (GKGNSGKS), 489 to 493 (ELKGG), and 558 to 561 (LKAD) each bind GTP. Residues 632–652 (IVAISSVVGFASLFTFTALKI) form a helical; Anchor for type IV membrane protein membrane-spanning segment. Residues 653 to 659 (YSSFKNT) lie on the Mitochondrial intermembrane side of the membrane.

It belongs to the mitochondrial Rho GTPase family.

It is found in the mitochondrion outer membrane. Functionally, mitochondrial GTPase involved in mitochondrial trafficking. Probably involved in control of anterograde transport of mitochondria and their subcellular distribution. In Kluyveromyces lactis (strain ATCC 8585 / CBS 2359 / DSM 70799 / NBRC 1267 / NRRL Y-1140 / WM37) (Yeast), this protein is Mitochondrial Rho GTPase 1 (GEM1).